The following is a 486-amino-acid chain: Arginine/agmatine antiporter (486 aa).

12 helical membrane-spanning segments follow: residues 12-32 (LGAI…GIFS), 41-61 (AGAG…FFIA), 85-105 (GFGP…QIFG), 129-149 (NTIP…FIVL), 160-180 (IIGT…TAFA), 211-231 (STML…VMSA), 242-262 (ATLL…ILPF), 296-316 (VGLL…VAEI), 341-361 (LSLY…YFST), 367-387 (MLSI…AFLF), 418-438 (LWLI…LLAL), and 461-481 (EVTK…LFST).

Belongs to the amino acid-polyamine-organocation (APC) superfamily. Basic amino acid/polyamine antiporter (APA) (TC 2.A.3.2) family.

It localises to the cell inner membrane. Catalyzes the exchange of L-arginine for agmatine. The arginine uptake by the bacterium in the macrophage may be a virulence factor against the host innate immune response. In Chlamydia caviae (strain ATCC VR-813 / DSM 19441 / 03DC25 / GPIC) (Chlamydophila caviae), this protein is Arginine/agmatine antiporter (aaxC).